Reading from the N-terminus, the 83-residue chain is Large ribosomal subunit protein bL31B (83 aa).

The protein belongs to the bacterial ribosomal protein bL31 family. Type B subfamily. As to quaternary structure, part of the 50S ribosomal subunit.

This chain is Large ribosomal subunit protein bL31B, found in Bacteroides fragilis (strain ATCC 25285 / DSM 2151 / CCUG 4856 / JCM 11019 / LMG 10263 / NCTC 9343 / Onslow / VPI 2553 / EN-2).